The primary structure comprises 607 residues: MAQNIPTKRQSAFGVFVKSKVKGPTIQQTGATKTPKTPSKIRRLSIRKSTRKIKHALKGKSGSQPVAAHKDMPVTQNTGQGEEGVKLKGYKMKTSPARVQEPQRTGSPEENSIGKGNIKTNIKGSQNVQAGQKFQERIATQHPQKRKPFGIEDSDDKTPVKRVRSDTAKSVQSPAKAVDVGEVEDSTEEAEKMFEWLIHPVKKEKFFSELWEKKPLLVKRHLESYNDGWFSTEDLTKILHENDIQFGRNLDVTTYEGGQRETHNPPGRANPAVVWDYYQNGCSVRLLNPQTYSQGVWRLCSTLQEYFSSMVGANIYLTPPGTQGFAPHYDDIEAFVLQLEGNFSQEEIGEAILDVTLEPGDLLYFPRGTIHQASALPDTHSLHITVSTCQRNTWGDLMEKLVPAALTMAFSEDVEFRQALPRDYLDYMGLANADLDDPRRKAFLETLQSLLSRLVNYVPVDAGVDQKAVEFMRDCLPPVFTKNERACSIYGCRTRLEKGRVVGSVDLKTSTPVKLIRKGAARLVMEGEQVFLYHVLENARVYHGAELQPIEVPPEAAPAIEYLMHSYPEYVTVDSFPLDHQQDKIDLAMLMFEKGIIIAQEPASVDN.

2 disordered regions span residues 23–121 (GPTI…IKTN) and 139–184 (ATQH…GEVE). Positions 25–37 (TIQQTGATKTPKT) are enriched in polar residues. Residues 39–58 (SKIRRLSIRKSTRKIKHALK) are compositionally biased toward basic residues. Over residues 156-167 (DKTPVKRVRSDT) the composition is skewed to basic and acidic residues. Residues 188 to 405 (EEAEKMFEWL…DLMEKLVPAA (218 aa)) form the JmjC domain. Fe cation contacts are provided by histidine 328, aspartate 330, and histidine 371.

This sequence belongs to the ROX family. NO66 subfamily. The cofactor is Fe(2+).

Its subcellular location is the nucleus. It carries out the reaction L-histidyl-[protein] + 2-oxoglutarate + O2 = (3S)-3-hydroxy-L-histidyl-[protein] + succinate + CO2. The catalysed reaction is N(6),N(6)-dimethyl-L-lysyl(36)-[histone H3] + 2 2-oxoglutarate + 2 O2 = L-lysyl(36)-[histone H3] + 2 formaldehyde + 2 succinate + 2 CO2. In terms of biological role, oxygenase that can act as both a histone lysine demethylase and a ribosomal histidine hydroxylase. Specifically demethylates 'Lys-4' (H3K4me) and 'Lys-36' (H3K36me) of histone H3, thereby playing a central role in histone code. Also catalyzes the hydroxylation of 60S ribosomal protein L8. The protein is Bifunctional lysine-specific demethylase and histidyl-hydroxylase NO66 of Branchiostoma floridae (Florida lancelet).